The sequence spans 362 residues: N-alpha-acetyltransferase 30 (362 aa).

Positions 1–20 (MAEVPPGPSSLLPPPAPPAP) are enriched in pro residues. 3 disordered regions span residues 1–26 (MAEVPPGPSSLLPPPAPPAPAAVEPR), 38–88 (CSED…NGLI), and 113–182 (ATTA…EEDE). Phosphoserine is present on residues S39 and S55. The segment covering 39-48 (SEDEEDDEEH) has biased composition (acidic residues). T117 is subject to Phosphothreonine. A compositionally biased stretch (low complexity) spans 149 to 165 (AVPSPVEAAAASDPAAA). The residue at position 152 (S152) is a Phosphoserine. Acidic residues predominate over residues 173-182 (TEQEEEEEDE). Residues S190, S196, and S199 each carry the phosphoserine modification. The N-acetyltransferase domain occupies 214–362 (RYVRYESELQ…DALRLKLWLR (149 aa)). At K233 the chain carries N6-acetyllysine.

This sequence belongs to the acetyltransferase family. MAK3 subfamily. Component of the N-terminal acetyltransferase C (NatC) complex, which is composed of NAA35, NAA38 and NAA30.

The protein resides in the cytoplasm. The protein localises to the nucleus. The enzyme catalyses N-terminal L-methionyl-L-leucyl-[protein] + acetyl-CoA = N-terminal N(alpha)-acetyl-L-methionyl-L-leucyl-[protein] + CoA + H(+). It catalyses the reaction N-terminal L-methionyl-L-isoleucyl-[protein] + acetyl-CoA = N-terminal N(alpha)-acetyl-L-methionyl-L-isoleucyl-[protein] + CoA + H(+). It carries out the reaction N-terminal L-methionyl-L-phenylalanyl-[protein] + acetyl-CoA = N-terminal N(alpha)-acetyl-L-methionyl-L-phenylalanyl-[protein] + CoA + H(+). The catalysed reaction is N-terminal L-methionyl-L-tryptophyl-[protein] + acetyl-CoA = N-terminal N(alpha)-acetyl-L-methionyl-L-tryptophyl-[protein] + CoA + H(+). The enzyme catalyses N-terminal L-methionyl-L-tyrosyl-[protein] + acetyl-CoA = N-terminal N(alpha)-acetyl-L-methionyl-L-tyrosyl-[protein] + CoA + H(+). Functionally, catalytic subunit of the N-terminal acetyltransferase C (NatC) complex. Catalyzes acetylation of the N-terminal methionine residues of peptides beginning with Met-Leu-Ala and Met-Leu-Gly. N-terminal acetylation protects proteins from ubiquitination and degradation by the N-end rule pathway. Necessary for the lysosomal localization and function of ARL8B sugeesting that ARL8B is a NatC substrate. The chain is N-alpha-acetyltransferase 30 (NAA30) from Homo sapiens (Human).